The sequence spans 80 residues: Cell division activator CedA (80 aa).

The protein belongs to the CedA family.

Its function is as follows. Activates the cell division inhibited by chromosomal DNA over-replication. In Salmonella typhimurium (strain LT2 / SGSC1412 / ATCC 700720), this protein is Cell division activator CedA.